The chain runs to 298 residues: Formylmethanofuran--tetrahydromethanopterin formyltransferase (298 aa).

Belongs to the FTR family. In terms of assembly, homotetramer.

It is found in the cytoplasm. It catalyses the reaction N-formylmethanofuran + 5,6,7,8-tetrahydromethanopterin + H(+) = N(5)-formyl-5,6,7,8-tetrahydromethanopterin + methanofuran. The protein operates within one-carbon metabolism; formaldehyde degradation; formate from formaldehyde (H(4)MPT route): step 4/5. Its function is as follows. Catalyzes the transfer of a formyl group from 5-formyl tetrahydromethanopterin (5-formyl-H(4)MPT) to methanofuran (MFR) to produce formylmethanofuran (formyl-MFR) and tetrahydromethanopterin (H(4)MPT). The polypeptide is Formylmethanofuran--tetrahydromethanopterin formyltransferase (Methylococcus capsulatus (strain ATCC 33009 / NCIMB 11132 / Bath)).